Consider the following 430-residue polypeptide: Phosphomethylpyrimidine synthase 2 (430 aa).

Residues Asn-66, Met-95, Tyr-124, His-164, 186–188, 227–230, and Glu-266 contribute to the substrate site; these read SRG and DGFR. Residue His-270 participates in Zn(2+) binding. Tyr-293 provides a ligand contact to substrate. Residue His-334 participates in Zn(2+) binding. [4Fe-4S] cluster is bound by residues Cys-411, Cys-414, and Cys-418.

Belongs to the ThiC family. As to quaternary structure, homodimer. Requires [4Fe-4S] cluster as cofactor.

The catalysed reaction is 5-amino-1-(5-phospho-beta-D-ribosyl)imidazole + S-adenosyl-L-methionine = 4-amino-2-methyl-5-(phosphooxymethyl)pyrimidine + CO + 5'-deoxyadenosine + formate + L-methionine + 3 H(+). The protein operates within cofactor biosynthesis; thiamine diphosphate biosynthesis. Functionally, catalyzes the synthesis of the hydroxymethylpyrimidine phosphate (HMP-P) moiety of thiamine from aminoimidazole ribotide (AIR) in a radical S-adenosyl-L-methionine (SAM)-dependent reaction. In Syntrophotalea carbinolica (strain DSM 2380 / NBRC 103641 / GraBd1) (Pelobacter carbinolicus), this protein is Phosphomethylpyrimidine synthase 2.